A 141-amino-acid chain; its full sequence is Large ribosomal subunit protein uL11 (141 aa).

This sequence belongs to the universal ribosomal protein uL11 family. As to quaternary structure, part of the ribosomal stalk of the 50S ribosomal subunit. Interacts with L10 and the large rRNA to form the base of the stalk. L10 forms an elongated spine to which L12 dimers bind in a sequential fashion forming a multimeric L10(L12)X complex. Post-translationally, one or more lysine residues are methylated.

Forms part of the ribosomal stalk which helps the ribosome interact with GTP-bound translation factors. The polypeptide is Large ribosomal subunit protein uL11 (Chloroherpeton thalassium (strain ATCC 35110 / GB-78)).